Reading from the N-terminus, the 208-residue chain is MRGKFISFEGIDGCGKTTQVKLLEEHLKKEGYDLLVLREPGGTRVGEKVREILLDRENLIFPVTEMLLYASSRAQLVEEKILPALSKGQMVIVDRFIDSSYVYQGYARGLGLEKVKIVNEIATKGLFPDITVYIDITPEEAIKRRQGKKADRLEGEDYEFHKKVREGYLRLVKDFPERFILIDGMQEVLAVHKMVVKAVEEYLKGAKV.

10-17 (GIDGCGKT) serves as a coordination point for ATP.

It belongs to the thymidylate kinase family.

The enzyme catalyses dTMP + ATP = dTDP + ADP. Functionally, phosphorylation of dTMP to form dTDP in both de novo and salvage pathways of dTTP synthesis. The sequence is that of Thymidylate kinase from Caldanaerobacter subterraneus subsp. tengcongensis (strain DSM 15242 / JCM 11007 / NBRC 100824 / MB4) (Thermoanaerobacter tengcongensis).